We begin with the raw amino-acid sequence, 193 residues long: Adenine phosphoribosyltransferase (193 aa).

It belongs to the purine/pyrimidine phosphoribosyltransferase family. Homodimer.

It is found in the cytoplasm. It carries out the reaction AMP + diphosphate = 5-phospho-alpha-D-ribose 1-diphosphate + adenine. Its pathway is purine metabolism; AMP biosynthesis via salvage pathway; AMP from adenine: step 1/1. Catalyzes a salvage reaction resulting in the formation of AMP, that is energically less costly than de novo synthesis. This is Adenine phosphoribosyltransferase from Bifidobacterium longum (strain DJO10A).